The sequence spans 455 residues: Bifunctional protein GlmU (455 aa).

Residues Met-1–Arg-230 are pyrophosphorylase. UDP-N-acetyl-alpha-D-glucosamine-binding positions include Leu-9–Gly-12, Lys-23, Gln-73, and Gly-78–Thr-79. Mg(2+) is bound at residue Asp-103. The UDP-N-acetyl-alpha-D-glucosamine site is built by Gly-140, Glu-155, Asn-170, and Asn-228. Asn-228 serves as a coordination point for Mg(2+). The interval Ile-231–Asn-251 is linker. The tract at residues Gly-252 to Lys-455 is N-acetyltransferase. UDP-N-acetyl-alpha-D-glucosamine contacts are provided by Arg-333 and Lys-351. The active-site Proton acceptor is His-363. UDP-N-acetyl-alpha-D-glucosamine-binding residues include Tyr-366 and Asn-377. Acetyl-CoA-binding positions include Asn-386 to Tyr-387, Ala-423, and Arg-440.

In the N-terminal section; belongs to the N-acetylglucosamine-1-phosphate uridyltransferase family. It in the C-terminal section; belongs to the transferase hexapeptide repeat family. Homotrimer. The cofactor is Mg(2+).

The protein localises to the cytoplasm. The catalysed reaction is alpha-D-glucosamine 1-phosphate + acetyl-CoA = N-acetyl-alpha-D-glucosamine 1-phosphate + CoA + H(+). The enzyme catalyses N-acetyl-alpha-D-glucosamine 1-phosphate + UTP + H(+) = UDP-N-acetyl-alpha-D-glucosamine + diphosphate. It functions in the pathway nucleotide-sugar biosynthesis; UDP-N-acetyl-alpha-D-glucosamine biosynthesis; N-acetyl-alpha-D-glucosamine 1-phosphate from alpha-D-glucosamine 6-phosphate (route II): step 2/2. Its pathway is nucleotide-sugar biosynthesis; UDP-N-acetyl-alpha-D-glucosamine biosynthesis; UDP-N-acetyl-alpha-D-glucosamine from N-acetyl-alpha-D-glucosamine 1-phosphate: step 1/1. It participates in bacterial outer membrane biogenesis; LPS lipid A biosynthesis. Functionally, catalyzes the last two sequential reactions in the de novo biosynthetic pathway for UDP-N-acetylglucosamine (UDP-GlcNAc). The C-terminal domain catalyzes the transfer of acetyl group from acetyl coenzyme A to glucosamine-1-phosphate (GlcN-1-P) to produce N-acetylglucosamine-1-phosphate (GlcNAc-1-P), which is converted into UDP-GlcNAc by the transfer of uridine 5-monophosphate (from uridine 5-triphosphate), a reaction catalyzed by the N-terminal domain. This chain is Bifunctional protein GlmU, found in Oceanobacillus iheyensis (strain DSM 14371 / CIP 107618 / JCM 11309 / KCTC 3954 / HTE831).